The primary structure comprises 107 residues: Phosphoribosyl-ATP pyrophosphatase (107 aa).

Belongs to the PRA-PH family.

It is found in the cytoplasm. It catalyses the reaction 1-(5-phospho-beta-D-ribosyl)-ATP + H2O = 1-(5-phospho-beta-D-ribosyl)-5'-AMP + diphosphate + H(+). It participates in amino-acid biosynthesis; L-histidine biosynthesis; L-histidine from 5-phospho-alpha-D-ribose 1-diphosphate: step 2/9. In Sinorhizobium fredii (strain NBRC 101917 / NGR234), this protein is Phosphoribosyl-ATP pyrophosphatase.